Here is a 1099-residue protein sequence, read N- to C-terminus: Protein transport protein Sec24A (1099 aa).

Disordered stretches follow at residues 1 to 36 (MSQPGIPASGGSSTGLQAQNGAASASGSPYTNGPVQ), 65 to 139 (KTLN…LPGA), and 279 to 317 (SQPTTKNPTMSRSVGYSYPSLPPGYQNTAPPSTTGAGLP). Polar residues-rich tracts occupy residues 10–20 (GGSSTGLQAQN), 68–90 (NPVSGQSNSGGSQTVSPLSNYQG), 108–126 (SLHSGPSPQMPLPTSQNPA), 279–292 (SQPTTKNPTMSRSV), and 303–317 (YQNTAPPSTTGAGLP). Positions 437, 440, 458, and 461 each coordinate Zn(2+). The segment at 437–461 (CRSCRTYINPFVSFLDQRRWKCNLC) is zinc finger-like. One copy of the Gelsolin-like repeat lies at 972–1044 (PQPPILQLSV…TPESARTIAF (73 aa)).

This sequence belongs to the SEC23/SEC24 family. SEC24 subfamily. COPII is composed of at least five proteins: the Sec23/24 complex, the Sec13/31 complex and Sar1. Interacts with TMED2. Interacts (as part of the Sec23/24 complex) with SEC22B; recruits SEC22B into COPII-coated vesicles for its transport from the endoplasmic reticulum to the Golgi. Interacts with STING1; promoting STING1 translocation to COPII vesicles in a STEEP1-dependent manner. Interacts with TMEM39A. Interacts with SACM1L; this interaction is reduced in the absence of TMEM39A. Interacts with kinase FAM20C; transport of FAM20C from the endoplasmic reticulum to the Golgi is likely to be mediated by COPII vesicles.

It localises to the cytoplasmic vesicle. It is found in the COPII-coated vesicle membrane. Its subcellular location is the endoplasmic reticulum membrane. The protein resides in the cytoplasm. The protein localises to the cytosol. Functionally, component of the coat protein complex II (COPII) which promotes the formation of transport vesicles from the endoplasmic reticulum (ER). The coat has two main functions, the physical deformation of the endoplasmic reticulum membrane into vesicles and the selection of cargo molecules for their transport to the Golgi complex. Plays a central role in cargo selection within the COPII complex and together with SEC24B may have a different specificity compared to SEC24C and SEC24D. May package preferentially cargos with cytoplasmic DxE or LxxLE motifs and may also recognize conformational epitopes. This Bos taurus (Bovine) protein is Protein transport protein Sec24A.